A 684-amino-acid polypeptide reads, in one-letter code: Glycine--tRNA ligase beta subunit (684 aa).

This sequence belongs to the class-II aminoacyl-tRNA synthetase family. Tetramer of two alpha and two beta subunits.

The protein resides in the cytoplasm. The catalysed reaction is tRNA(Gly) + glycine + ATP = glycyl-tRNA(Gly) + AMP + diphosphate. This is Glycine--tRNA ligase beta subunit from Pseudomonas aeruginosa (strain LESB58).